Consider the following 195-residue polypeptide: Probable prefoldin subunit 3 (195 aa).

This sequence belongs to the prefoldin subunit alpha family. In terms of assembly, heterohexamer of two PFD-alpha type and four PFD-beta type subunits.

Its function is as follows. Binds specifically to cytosolic chaperonin (c-CPN) and transfers target proteins to it. Binds to nascent polypeptide chain and promotes folding in an environment in which there are many competing pathways for nonnative proteins. In Dictyostelium discoideum (Social amoeba), this protein is Probable prefoldin subunit 3 (pfdn3).